Reading from the N-terminus, the 131-residue chain is Monothiol glutaredoxin-S6 (131 aa).

Residues 31 to 131 (SAFVQNAIYS…KLLGNSQSQR (101 aa)) form the Glutaredoxin domain. Cysteine 51 provides a ligand contact to [2Fe-2S] cluster.

This sequence belongs to the glutaredoxin family. CPYC subfamily.

It is found in the cytoplasm. Its function is as follows. May only reduce GSH-thiol disulfides, but not protein disulfides. In Oryza sativa subsp. japonica (Rice), this protein is Monothiol glutaredoxin-S6 (GRXS6).